The primary structure comprises 532 residues: Putative F-box/LRR-repeat protein At3g42770 (532 aa).

Residues 1–46 (MNCLPDELLVQILSFLPTKEATSTSLLSKRWRTLFTLSPNLDFDNS) enclose the F-box domain. LRR repeat units lie at residues 113–135 (VSEL…IFTS), 279–305 (IRNV…EIPM), and 398–420 (MNDL…SPKL).

This chain is Putative F-box/LRR-repeat protein At3g42770, found in Arabidopsis thaliana (Mouse-ear cress).